A 156-amino-acid polypeptide reads, in one-letter code: MTKMNVESFNLDHTKVVAPFIRLAGTMEGLNGDVIHKYDIRFKQPNKEHMDMPGLHSLEHLMAENIRNHSDKVVDLSPMGCQTGFYVSFINHDNYDDVLNIVEATLNDVLNATEVPACNEVQCGWAASHSLEGAKTIAQAFLDKRNEWHDVFGTGK.

Residues His56, His60, and Cys123 each contribute to the Fe cation site.

The protein belongs to the LuxS family. Homodimer. It depends on Fe cation as a cofactor.

The enzyme catalyses S-(5-deoxy-D-ribos-5-yl)-L-homocysteine = (S)-4,5-dihydroxypentane-2,3-dione + L-homocysteine. In terms of biological role, involved in the synthesis of autoinducer 2 (AI-2) which is secreted by bacteria and is used to communicate both the cell density and the metabolic potential of the environment. The regulation of gene expression in response to changes in cell density is called quorum sensing. Catalyzes the transformation of S-ribosylhomocysteine (RHC) to homocysteine (HC) and 4,5-dihydroxy-2,3-pentadione (DPD). This Staphylococcus aureus (strain Mu3 / ATCC 700698) protein is S-ribosylhomocysteine lyase.